A 1589-amino-acid chain; its full sequence is Pentafunctional AROM polypeptide (1589 aa).

Residues 1–384 (MAAPTTIKIL…HEQQASVVSN (384 aa)) form a 3-dehydroquinate synthase region. Residues 44–46 (DTT), 81–84 (ELSK), 114–116 (GGV), and D119 each bind NAD(+). Residue R130 coordinates 7-phospho-2-dehydro-3-deoxy-D-arabino-heptonate. 139 to 140 (TT) serves as a coordination point for NAD(+). Positions 146 and 152 each coordinate 7-phospho-2-dehydro-3-deoxy-D-arabino-heptonate. NAD(+) is bound at residue K161. Residue N162 participates in 7-phospho-2-dehydro-3-deoxy-D-arabino-heptonate binding. NAD(+) contacts are provided by residues 179–182 (FLNT) and N190. E194 serves as a coordination point for Zn(2+). 7-phospho-2-dehydro-3-deoxy-D-arabino-heptonate contacts are provided by residues 194-197 (EVIK) and K250. E260 serves as the catalytic Proton acceptor; for 3-dehydroquinate synthase activity. 7-phospho-2-dehydro-3-deoxy-D-arabino-heptonate is bound by residues 264–268 (RNLLN) and H271. Position 271 (H271) interacts with Zn(2+). H275 serves as the catalytic Proton acceptor; for 3-dehydroquinate synthase activity. Residues H287 and K356 each contribute to the 7-phospho-2-dehydro-3-deoxy-D-arabino-heptonate site. Residue H287 coordinates Zn(2+). Positions 397–841 (VSPGVPKSLQ…WDTLAQLFKA (445 aa)) are EPSP synthase. Catalysis depends on C823, which acts as the For EPSP synthase activity. A shikimate kinase region spans residues 861-1052 (ASIFIIGMRG…KKKPQSFFVS (192 aa)). 867–874 (GMRGAGKT) contacts ATP. The interval 1053–1273 (LTLPDLRPSA…AAPGQLSAQD (221 aa)) is 3-dehydroquinase. Catalysis depends on H1176, which acts as the Proton acceptor; for 3-dehydroquinate dehydratase activity. K1204 functions as the Schiff-base intermediate with substrate; for 3-dehydroquinate dehydratase activity in the catalytic mechanism. The interval 1286-1589 (PRKFAIFGKP…VMNPGTDNRG (304 aa)) is shikimate dehydrogenase.

In the N-terminal section; belongs to the sugar phosphate cyclases superfamily. Dehydroquinate synthase family. The protein in the 2nd section; belongs to the EPSP synthase family. It in the 3rd section; belongs to the shikimate kinase family. This sequence in the 4th section; belongs to the type-I 3-dehydroquinase family. In the C-terminal section; belongs to the shikimate dehydrogenase family. As to quaternary structure, homodimer. Requires Zn(2+) as cofactor.

Its subcellular location is the cytoplasm. The enzyme catalyses 7-phospho-2-dehydro-3-deoxy-D-arabino-heptonate = 3-dehydroquinate + phosphate. The catalysed reaction is 3-dehydroquinate = 3-dehydroshikimate + H2O. It carries out the reaction shikimate + NADP(+) = 3-dehydroshikimate + NADPH + H(+). It catalyses the reaction shikimate + ATP = 3-phosphoshikimate + ADP + H(+). The enzyme catalyses 3-phosphoshikimate + phosphoenolpyruvate = 5-O-(1-carboxyvinyl)-3-phosphoshikimate + phosphate. It participates in metabolic intermediate biosynthesis; chorismate biosynthesis; chorismate from D-erythrose 4-phosphate and phosphoenolpyruvate: step 2/7. The protein operates within metabolic intermediate biosynthesis; chorismate biosynthesis; chorismate from D-erythrose 4-phosphate and phosphoenolpyruvate: step 3/7. Its pathway is metabolic intermediate biosynthesis; chorismate biosynthesis; chorismate from D-erythrose 4-phosphate and phosphoenolpyruvate: step 4/7. It functions in the pathway metabolic intermediate biosynthesis; chorismate biosynthesis; chorismate from D-erythrose 4-phosphate and phosphoenolpyruvate: step 5/7. It participates in metabolic intermediate biosynthesis; chorismate biosynthesis; chorismate from D-erythrose 4-phosphate and phosphoenolpyruvate: step 6/7. In terms of biological role, the AROM polypeptide catalyzes 5 consecutive enzymatic reactions in prechorismate polyaromatic amino acid biosynthesis. In Coccidioides posadasii (strain C735) (Valley fever fungus), this protein is Pentafunctional AROM polypeptide.